We begin with the raw amino-acid sequence, 70 residues long: Putative membrane protein insertion efficiency factor (70 aa).

The protein belongs to the UPF0161 family.

Its subcellular location is the cell membrane. Its function is as follows. Could be involved in insertion of integral membrane proteins into the membrane. This chain is Putative membrane protein insertion efficiency factor, found in Symbiobacterium thermophilum (strain DSM 24528 / JCM 14929 / IAM 14863 / T).